We begin with the raw amino-acid sequence, 236 residues long: MSQEWKEYAKRVLDEWEPKTKLGMMVKEGQITDIHEIFRRGYQIKEPEIIDVLLPEVNARENQEVLDIALTVRMTDSGRRVRFRVLAAVGNRDGYVGLGIGHGKEVGIAIRKAINYAKLNIIEIKRGCGSWECRCRRPHSVPFAVEGKEGSVRVRLIPGPRGLGLVIGDVGKKILRLAGVQDVWSQTFGETRTTVNFAKAVFNALYNTNRVAISPEMIERYGIVVGRAMPTTFTLE.

An S5 DRBM domain is found at 61–124 (ENQEVLDIAL…NYAKLNIIEI (64 aa)).

Belongs to the universal ribosomal protein uS5 family. As to quaternary structure, part of the 30S ribosomal subunit. Contacts protein S4.

Its function is as follows. With S4 and S12 plays an important role in translational accuracy. In Pyrococcus furiosus (strain ATCC 43587 / DSM 3638 / JCM 8422 / Vc1), this protein is Small ribosomal subunit protein uS5.